Reading from the N-terminus, the 360-residue chain is CFA/I fimbrial subunit E (360 aa).

The protein localises to the fimbrium. This chain is CFA/I fimbrial subunit E (cfaE), found in Escherichia coli.